The following is a 488-amino-acid chain: MAGRESPPPSAPSMAPISFGFTRTSVRRRLADLGDSERQAPEEKDFLATVEGRKLQSVNPPEAPKELVIPLIQNGSRRQPLSKNPKPSSETSTVLMSDGVLSQAVKELIEESKKSLEERENAGVDPTLTIPMIQKGCTPIEEGSDSEPQAETVPEEADYEAVPVEAYGLAMLRGMGWKPGKGIGNTFSQVVKPRVNSIRPKGLGLGANRMEAQDLASVGSHHPPRPDGDRENDKEGQPQGLMHGRAVVVLSGPYRGLYGKVEGLDPDNVRAMVRLAVGNRIVTVSEYCLRPVSQQEFDSHTSKPGHVSQTSTEQQNRATGTASSLKAAQNQEDSKRRQKGSEKKRKHSPDRQDGPVPKTEKAAPRNKHWLHRDLRVRFIDKLHKSGRYYNTKMTIEDVLSPDTCVCRTDEGRVLEDVREDMLETLIPKGEGHRVMVVLGPHAGKVGLLRSRDRAQSHALVQLRRENQVVELHYNAICQYMGPGDSDED.

The span at 1-11 (MAGRESPPPSA) shows a compositional bias: pro residues. Positions 1–20 (MAGRESPPPSAPSMAPISFG) are disordered. Residue alanine 2 is modified to N-acetylalanine. Residue serine 25 is modified to Phosphoserine; by PKA. The interval 72–97 (IQNGSRRQPLSKNPKPSSETSTVLMS) is disordered. Over residues 73–95 (QNGSRRQPLSKNPKPSSETSTVL) the composition is skewed to polar residues. Serine 115 carries the post-translational modification Phosphoserine. The 47-residue stretch at 164–210 (VEAYGLAMLRGMGWKPGKGIGNTFSQVVKPRVNSIRPKGLGLGANRM) folds into the G-patch domain. Disordered stretches follow at residues 216 to 241 (ASVG…PQGL) and 295 to 367 (QEFD…PRNK). Basic and acidic residues predominate over residues 224–236 (PRPDGDRENDKEG). The KOW 1 domain occupies 231–258 (ENDKEGQPQGLMHGRAVVVLSGPYRGLY). Polar residues predominate over residues 307–331 (VSQTSTEQQNRATGTASSLKAAQNQ). Composition is skewed to basic and acidic residues over residues 332–341 (EDSKRRQKGS) and 349–363 (PDRQ…EKAA). The region spanning 401–428 (PDTCVCRTDEGRVLEDVREDMLETLIPK) is the KOW 2 domain. Serine 485 carries the phosphoserine modification.

Belongs to the MOS2 family. As to quaternary structure, component of the minor spliceosome, which splices U12-type introns. Interacts with PRKX, PRKACB and DHX16. In terms of processing, phosphorylation regulates its ability to bind RNA.

The protein localises to the nucleus. Functionally, RNA-binding protein involved in pre-mRNA splicing. As a component of the minor spliceosome, involved in the splicing of U12-type introns in pre-mRNAs. In Mus musculus (Mouse), this protein is G-patch domain and KOW motifs-containing protein (Gpkow).